The following is a 434-amino-acid chain: Ribosomal protein uS12 methylthiotransferase RimO (434 aa).

The 117-residue stretch at 6 to 122 (NRVFLLSLGC…ILTAIGARYR (117 aa)) folds into the MTTase N-terminal domain. [4Fe-4S] cluster is bound by residues C15, C51, C85, C146, C150, and C153. A Radical SAM core domain is found at 132-361 (TAPGHTSFLK…MELQEGISEE (230 aa)). Residues 364–431 (KRLEGREIAV…PYELFGTVLK (68 aa)) enclose the TRAM domain.

This sequence belongs to the methylthiotransferase family. RimO subfamily. [4Fe-4S] cluster serves as cofactor.

It is found in the cytoplasm. The enzyme catalyses L-aspartate(89)-[ribosomal protein uS12]-hydrogen + (sulfur carrier)-SH + AH2 + 2 S-adenosyl-L-methionine = 3-methylsulfanyl-L-aspartate(89)-[ribosomal protein uS12]-hydrogen + (sulfur carrier)-H + 5'-deoxyadenosine + L-methionine + A + S-adenosyl-L-homocysteine + 2 H(+). Catalyzes the methylthiolation of an aspartic acid residue of ribosomal protein uS12. This Chlorobium phaeovibrioides (strain DSM 265 / 1930) (Prosthecochloris vibrioformis (strain DSM 265)) protein is Ribosomal protein uS12 methylthiotransferase RimO.